An 81-amino-acid polypeptide reads, in one-letter code: uncharacterized protein (81 aa).

A signal peptide spans methionine 1–alanine 22. The disordered stretch occupies residues histidine 29–lysine 81. Positions serine 30–glycine 58 are enriched in low complexity. Over residues serine 59–serine 75 the composition is skewed to gly residues.

The protein resides in the secreted. This is an uncharacterized protein from Dictyostelium discoideum (Social amoeba).